The chain runs to 278 residues: Sulfur carrier protein FdhD (278 aa).

Residue Cys-121 is the Cysteine persulfide intermediate of the active site. 260-265 (FCKPGR) is a binding site for Mo-bis(molybdopterin guanine dinucleotide).

The protein belongs to the FdhD family.

It localises to the cytoplasm. Required for formate dehydrogenase (FDH) activity. Acts as a sulfur carrier protein that transfers sulfur from IscS to the molybdenum cofactor prior to its insertion into FDH. The protein is Sulfur carrier protein FdhD of Salmonella newport (strain SL254).